The following is a 151-amino-acid chain: Deoxyuridine 5'-triphosphate nucleotidohydrolase (151 aa).

Substrate-binding positions include 70–72, Asn-83, 87–89, and Met-97; these read RSG and LID.

It belongs to the dUTPase family. Requires Mg(2+) as cofactor.

The catalysed reaction is dUTP + H2O = dUMP + diphosphate + H(+). It functions in the pathway pyrimidine metabolism; dUMP biosynthesis; dUMP from dCTP (dUTP route): step 2/2. In terms of biological role, this enzyme is involved in nucleotide metabolism: it produces dUMP, the immediate precursor of thymidine nucleotides and it decreases the intracellular concentration of dUTP so that uracil cannot be incorporated into DNA. This is Deoxyuridine 5'-triphosphate nucleotidohydrolase from Mannheimia succiniciproducens (strain KCTC 0769BP / MBEL55E).